The sequence spans 400 residues: Carbamoyl phosphate synthase small chain (400 aa).

The CPSase stretch occupies residues 1–199 (MSNETNANST…PYVIEAEGEA (199 aa)). The L-glutamine site is built by Ser-66, Gly-250, and Gly-252. The Glutamine amidotransferase type-1 domain maps to 200-395 (RHTVVAYDLG…VALMDEDSEN (196 aa)). Catalysis depends on Cys-278, which acts as the Nucleophile. The L-glutamine site is built by Phe-279, Gln-282, Asn-320, Gly-322, and Phe-323. Catalysis depends on residues His-368 and Glu-370.

It belongs to the CarA family. As to quaternary structure, composed of two chains; the small (or glutamine) chain promotes the hydrolysis of glutamine to ammonia, which is used by the large (or ammonia) chain to synthesize carbamoyl phosphate. Tetramer of heterodimers (alpha,beta)4.

The enzyme catalyses hydrogencarbonate + L-glutamine + 2 ATP + H2O = carbamoyl phosphate + L-glutamate + 2 ADP + phosphate + 2 H(+). The catalysed reaction is L-glutamine + H2O = L-glutamate + NH4(+). It functions in the pathway amino-acid biosynthesis; L-arginine biosynthesis; carbamoyl phosphate from bicarbonate: step 1/1. It participates in pyrimidine metabolism; UMP biosynthesis via de novo pathway; (S)-dihydroorotate from bicarbonate: step 1/3. Functionally, small subunit of the glutamine-dependent carbamoyl phosphate synthetase (CPSase). CPSase catalyzes the formation of carbamoyl phosphate from the ammonia moiety of glutamine, carbonate, and phosphate donated by ATP, constituting the first step of 2 biosynthetic pathways, one leading to arginine and/or urea and the other to pyrimidine nucleotides. The small subunit (glutamine amidotransferase) binds and cleaves glutamine to supply the large subunit with the substrate ammonia. This chain is Carbamoyl phosphate synthase small chain, found in Corynebacterium efficiens (strain DSM 44549 / YS-314 / AJ 12310 / JCM 11189 / NBRC 100395).